The following is a 182-amino-acid chain: Crossover junction endodeoxyribonuclease RuvC (182 aa).

Catalysis depends on residues aspartate 7, glutamate 69, and aspartate 141. Residues aspartate 7, glutamate 69, and aspartate 141 each contribute to the Mg(2+) site.

The protein belongs to the RuvC family. In terms of assembly, homodimer which binds Holliday junction (HJ) DNA. The HJ becomes 2-fold symmetrical on binding to RuvC with unstacked arms; it has a different conformation from HJ DNA in complex with RuvA. In the full resolvosome a probable DNA-RuvA(4)-RuvB(12)-RuvC(2) complex forms which resolves the HJ. It depends on Mg(2+) as a cofactor.

It is found in the cytoplasm. It carries out the reaction Endonucleolytic cleavage at a junction such as a reciprocal single-stranded crossover between two homologous DNA duplexes (Holliday junction).. In terms of biological role, the RuvA-RuvB-RuvC complex processes Holliday junction (HJ) DNA during genetic recombination and DNA repair. Endonuclease that resolves HJ intermediates. Cleaves cruciform DNA by making single-stranded nicks across the HJ at symmetrical positions within the homologous arms, yielding a 5'-phosphate and a 3'-hydroxyl group; requires a central core of homology in the junction. The consensus cleavage sequence is 5'-(A/T)TT(C/G)-3'. Cleavage occurs on the 3'-side of the TT dinucleotide at the point of strand exchange. HJ branch migration catalyzed by RuvA-RuvB allows RuvC to scan DNA until it finds its consensus sequence, where it cleaves and resolves the cruciform DNA. This chain is Crossover junction endodeoxyribonuclease RuvC, found in Polaromonas sp. (strain JS666 / ATCC BAA-500).